The following is a 332-amino-acid chain: L-lactate dehydrogenase A chain (332 aa).

NAD(+)-binding positions include 29–57 (GAVGMACAISILMKDLADELALVDVVEDK) and Arg-99. Residues Arg-106, Asn-138, and Arg-169 each contribute to the substrate site. Asn-138 lines the NAD(+) pocket. Catalysis depends on His-193, which acts as the Proton acceptor. Position 248 (Thr-248) interacts with substrate.

The protein belongs to the LDH/MDH superfamily. LDH family. Homotetramer.

It localises to the cytoplasm. The enzyme catalyses (S)-lactate + NAD(+) = pyruvate + NADH + H(+). It participates in fermentation; pyruvate fermentation to lactate; (S)-lactate from pyruvate: step 1/1. In terms of biological role, interconverts simultaneously and stereospecifically pyruvate and lactate with concomitant interconversion of NADH and NAD(+). The chain is L-lactate dehydrogenase A chain (LDHA) from Columba livia (Rock dove).